The following is a 195-amino-acid chain: Probable GTP-binding protein EngB (195 aa).

The EngB-type G domain occupies 24 to 195; the sequence is GLSEVALSGR…QIWDLIANYL (172 aa). GTP is bound by residues 32 to 39, 59 to 63, 77 to 80, 144 to 147, and 176 to 178; these read GRSNVGKS, GKTQT, DVPG, TKED, and YSS. Residues serine 39 and threonine 61 each coordinate Mg(2+).

This sequence belongs to the TRAFAC class TrmE-Era-EngA-EngB-Septin-like GTPase superfamily. EngB GTPase family. Mg(2+) is required as a cofactor.

Functionally, necessary for normal cell division and for the maintenance of normal septation. The sequence is that of Probable GTP-binding protein EngB from Staphylococcus haemolyticus (strain JCSC1435).